Consider the following 372-residue polypeptide: tRNA-specific 2-thiouridylase MnmA (372 aa).

ATP contacts are provided by residues 11–18 (GMSGGVDS) and Met37. Residues 97–99 (NPD) form an interaction with target base in tRNA region. The active-site Nucleophile is the Cys102. Residues Cys102 and Cys199 are joined by a disulfide bond. Gly126 serves as a coordination point for ATP. The interaction with tRNA stretch occupies residues 149 to 151 (KDQ). Residue Cys199 is the Cysteine persulfide intermediate of the active site. Residues 309-310 (RY) are interaction with tRNA.

This sequence belongs to the MnmA/TRMU family.

It localises to the cytoplasm. The enzyme catalyses S-sulfanyl-L-cysteinyl-[protein] + uridine(34) in tRNA + AH2 + ATP = 2-thiouridine(34) in tRNA + L-cysteinyl-[protein] + A + AMP + diphosphate + H(+). Functionally, catalyzes the 2-thiolation of uridine at the wobble position (U34) of tRNA, leading to the formation of s(2)U34. This Staphylococcus aureus (strain USA300) protein is tRNA-specific 2-thiouridylase MnmA.